The following is a 335-amino-acid chain: Phospho-N-acetylmuramoyl-pentapeptide-transferase (335 aa).

Transmembrane regions (helical) follow at residues 3-23 (LTIL…PHFI), 53-73 (GGTV…LVYF), 78-98 (SLGL…IGFL), 118-138 (FTLQ…PSGI), 143-163 (VFGY…FWVV), 174-194 (GIDG…GVIA), 200-220 (FDVL…FLFN), 226-246 (IFMG…ISIA), 251-271 (WTLL…MLQV), and 314-334 (VDAF…AILY).

It belongs to the glycosyltransferase 4 family. MraY subfamily. It depends on Mg(2+) as a cofactor.

It localises to the cell membrane. The catalysed reaction is UDP-N-acetyl-alpha-D-muramoyl-L-alanyl-gamma-D-glutamyl-L-lysyl-D-alanyl-D-alanine + di-trans,octa-cis-undecaprenyl phosphate = Mur2Ac(oyl-L-Ala-gamma-D-Glu-L-Lys-D-Ala-D-Ala)-di-trans,octa-cis-undecaprenyl diphosphate + UMP. The protein operates within cell wall biogenesis; peptidoglycan biosynthesis. Its function is as follows. Catalyzes the initial step of the lipid cycle reactions in the biosynthesis of the cell wall peptidoglycan: transfers peptidoglycan precursor phospho-MurNAc-pentapeptide from UDP-MurNAc-pentapeptide onto the lipid carrier undecaprenyl phosphate, yielding undecaprenyl-pyrophosphoryl-MurNAc-pentapeptide, known as lipid I. The polypeptide is Phospho-N-acetylmuramoyl-pentapeptide-transferase (Streptococcus equi subsp. zooepidemicus (strain MGCS10565)).